Consider the following 190-residue polypeptide: Putative phosphatidylethanolamine-binding protein (190 aa).

It belongs to the phosphatidylethanolamine-binding protein family.

The polypeptide is Putative phosphatidylethanolamine-binding protein (Plasmodium falciparum).